We begin with the raw amino-acid sequence, 381 residues long: MASIRRPHSPAKQQHLLRHGHLGPFASSSPPSSPLRHSSSSSSPRSAAHHHHHLLAAAGHTSFRRPLPRFAAFFLLGSFLGLLHFLSHLPRPLGPIPNPNSHHRHRDPFPILQHPHPPSTPHSNHKLLIVVTPTRARPSQAYYLTRMAHTLRLLHDSPLLWIVVQAGNPTPEAAAALRRTAVLHRYVGCCHNINASAPDFRPHQINAALDIVDNHRLDGVLYFADEEGVYSLHLFHHLRQIRRFATWPVPEISQHTNEVVLQGPVCKQGQVVGWHTTHDGNKLRRFHLAMSGFAFNSTMLWDPKLRSHLAWNSIRHPEMVKESLQGSAFVEQLVEDESQMEGIPADCSQIMNWHVPFGSESVVYPKGWRVATDLDVIIPLK.

Topologically, residues 1–69 (MASIRRPHSP…HTSFRRPLPR (69 aa)) are cytoplasmic. Positions 21–50 (HLGPFASSSPPSSPLRHSSSSSSPRSAAHH) are disordered. Residues 26–46 (ASSSPPSSPLRHSSSSSSPRS) are compositionally biased toward low complexity. The chain crosses the membrane as a helical; Signal-anchor for type II membrane protein span at residues 70–90 (FAAFFLLGSFLGLLHFLSHLP). Over 91–381 (RPLGPIPNPN…TDLDVIIPLK (291 aa)) the chain is Lumenal. Positions 96–122 (IPNPNSHHRHRDPFPILQHPHPPSTPH) are disordered. N-linked (GlcNAc...) asparagine glycosylation is found at Asn194 and Asn296.

Belongs to the glycosyltransferase 43 family.

The protein localises to the golgi apparatus membrane. Functionally, involved in the synthesis of glucuronoxylan hemicellulose in secondary cell walls. This chain is Probable glucuronosyltransferase Os04g0103100, found in Oryza sativa subsp. japonica (Rice).